The sequence spans 215 residues: Redox-sensing transcriptional repressor Rex 2 (215 aa).

A DNA-binding region (H-T-H motif) is located at residues 15-54 (VYLRYLKMLGDSGVKRIKSREFSEMIQIPSATIRRDFSHV). 89 to 94 (GCGNLG) serves as a coordination point for NAD(+).

This sequence belongs to the transcriptional regulatory Rex family. In terms of assembly, homodimer.

Its subcellular location is the cytoplasm. Functionally, modulates transcription in response to changes in cellular NADH/NAD(+) redox state. This chain is Redox-sensing transcriptional repressor Rex 2, found in Enterococcus faecalis (strain ATCC 700802 / V583).